The following is a 236-amino-acid chain: Purine nucleoside phosphorylase DeoD-type 2 (236 aa).

Position 5 (histidine 5) interacts with a purine D-ribonucleoside. Phosphate is bound by residues glycine 21, arginine 25, arginine 44, and 88–91 (RVGS). Residues 180–182 (DME) and 204–205 (SD) each bind a purine D-ribonucleoside. The Proton donor role is filled by aspartate 205.

Belongs to the PNP/UDP phosphorylase family. As to quaternary structure, homohexamer; trimer of homodimers.

The catalysed reaction is a purine D-ribonucleoside + phosphate = a purine nucleobase + alpha-D-ribose 1-phosphate. The enzyme catalyses a purine 2'-deoxy-D-ribonucleoside + phosphate = a purine nucleobase + 2-deoxy-alpha-D-ribose 1-phosphate. Functionally, catalyzes the reversible phosphorolytic breakdown of the N-glycosidic bond in the beta-(deoxy)ribonucleoside molecules, with the formation of the corresponding free purine bases and pentose-1-phosphate. The polypeptide is Purine nucleoside phosphorylase DeoD-type 2 (Aliivibrio fischeri (strain ATCC 700601 / ES114) (Vibrio fischeri)).